Here is a 188-residue protein sequence, read N- to C-terminus: Crossover junction endodeoxyribonuclease RuvC (188 aa).

Residues Asp7, Glu68, and Asp141 contribute to the active site. Mg(2+) is bound by residues Asp7, Glu68, and Asp141.

The protein belongs to the RuvC family. In terms of assembly, homodimer which binds Holliday junction (HJ) DNA. The HJ becomes 2-fold symmetrical on binding to RuvC with unstacked arms; it has a different conformation from HJ DNA in complex with RuvA. In the full resolvosome a probable DNA-RuvA(4)-RuvB(12)-RuvC(2) complex forms which resolves the HJ. It depends on Mg(2+) as a cofactor.

It is found in the cytoplasm. The enzyme catalyses Endonucleolytic cleavage at a junction such as a reciprocal single-stranded crossover between two homologous DNA duplexes (Holliday junction).. The RuvA-RuvB-RuvC complex processes Holliday junction (HJ) DNA during genetic recombination and DNA repair. Endonuclease that resolves HJ intermediates. Cleaves cruciform DNA by making single-stranded nicks across the HJ at symmetrical positions within the homologous arms, yielding a 5'-phosphate and a 3'-hydroxyl group; requires a central core of homology in the junction. The consensus cleavage sequence is 5'-(A/T)TT(C/G)-3'. Cleavage occurs on the 3'-side of the TT dinucleotide at the point of strand exchange. HJ branch migration catalyzed by RuvA-RuvB allows RuvC to scan DNA until it finds its consensus sequence, where it cleaves and resolves the cruciform DNA. The chain is Crossover junction endodeoxyribonuclease RuvC from Streptomyces coelicolor (strain ATCC BAA-471 / A3(2) / M145).